Reading from the N-terminus, the 457-residue chain is ERV-H1 provirus ancestral Env polyprotein (457 aa).

An N-terminal signal peptide occupies residues 1-35 (MIFAGKAPSNTSTLMKFYSLILYSLLFSFPFLCHP). 2 N-linked (GlcNAc...) asparagine glycosylation sites follow: asparagine 10 and asparagine 47. A CXXC motif is present at residues 64-67 (CWLC). Residues asparagine 197, asparagine 222, asparagine 265, asparagine 283, asparagine 352, and asparagine 370 are each glycosylated (N-linked (GlcNAc...) asparagine). Residues 388-408 (VIPLIPLMFGLGLSASTIALS) form a fusion peptide region.

This sequence belongs to the gamma type-C retroviral envelope protein family. HERV class-I H env subfamily. As to quaternary structure, the surface (SU) and transmembrane (TM) proteins form a heterodimer. SU and TM are attached by noncovalent interactions or by a labile interchain disulfide bond. Post-translationally, specific enzymatic cleavages in vivo yield the mature SU and TM proteins. In terms of processing, the CXXC motif is highly conserved across a broad range of retroviral envelope proteins. It is thought to participate in the formation of a labile disulfide bond possibly with the CX6CC motif present in the transmembrane protein.

The protein resides in the virion. Retroviral envelope proteins mediate receptor recognition and membrane fusion during early infection. Endogenous envelope proteins may have kept, lost or modified their original function during evolution. Functionally, SU mediates receptor recognition. In terms of biological role, TM anchors the envelope heterodimer to the viral membrane through one transmembrane domain. The other hydrophobic domain, called fusion peptide, mediates fusion of the viral membrane with the target cell membrane. This Pan troglodytes (Chimpanzee) protein is ERV-H1 provirus ancestral Env polyprotein.